The chain runs to 305 residues: Syntaxin-112 (305 aa).

Met1 is modified (N-acetylmethionine). Positions 52 to 119 (QEIETIKTLI…TLIETLEKRN (68 aa)) form a coiled coil. In terms of domain architecture, t-SNARE coiled-coil homology spans 210-272 (DLKTKERHEA…SGGTNSLYYA (63 aa)).

The protein belongs to the syntaxin family. As to quaternary structure, part of the t-SNARE complex.

Vesicle trafficking protein that functions in the secretory pathway. This is Syntaxin-112 (SYP112) from Arabidopsis thaliana (Mouse-ear cress).